Consider the following 471-residue polypeptide: Serine hydroxymethyltransferase, cytosolic (471 aa).

K249 is subject to N6-(pyridoxal phosphate)lysine.

It belongs to the SHMT family. Requires pyridoxal 5'-phosphate as cofactor.

The protein resides in the cytoplasm. It is found in the cytosol. The catalysed reaction is (6R)-5,10-methylene-5,6,7,8-tetrahydrofolate + glycine + H2O = (6S)-5,6,7,8-tetrahydrofolate + L-serine. It functions in the pathway one-carbon metabolism; tetrahydrofolate interconversion. Catalyzes the interconversion of serine and glycine. Essential for viability and required for virulence in a murine model of established pulmonary infection. This Aspergillus fumigatus (strain ATCC MYA-4609 / CBS 101355 / FGSC A1100 / Af293) (Neosartorya fumigata) protein is Serine hydroxymethyltransferase, cytosolic.